A 206-amino-acid chain; its full sequence is Protein GrpE (206 aa).

A compositionally biased stretch (basic and acidic residues) spans 1 to 17 (MSNESIKAEQDLIHEGV). The disordered stretch occupies residues 1-20 (MSNESIKAEQDLIHEGVESE).

Belongs to the GrpE family. In terms of assembly, homodimer.

The protein localises to the cytoplasm. Its function is as follows. Participates actively in the response to hyperosmotic and heat shock by preventing the aggregation of stress-denatured proteins, in association with DnaK and GrpE. It is the nucleotide exchange factor for DnaK and may function as a thermosensor. Unfolded proteins bind initially to DnaJ; upon interaction with the DnaJ-bound protein, DnaK hydrolyzes its bound ATP, resulting in the formation of a stable complex. GrpE releases ADP from DnaK; ATP binding to DnaK triggers the release of the substrate protein, thus completing the reaction cycle. Several rounds of ATP-dependent interactions between DnaJ, DnaK and GrpE are required for fully efficient folding. This Shewanella oneidensis (strain ATCC 700550 / JCM 31522 / CIP 106686 / LMG 19005 / NCIMB 14063 / MR-1) protein is Protein GrpE.